Reading from the N-terminus, the 336-residue chain is Alcohol dehydrogenase, propanol-preferring (336 aa).

Zn(2+) is bound by residues Cys37, His58, Cys89, Cys92, Cys95, Cys103, and Cys145.

Belongs to the zinc-containing alcohol dehydrogenase family. Zn(2+) is required as a cofactor.

The enzyme catalyses a primary alcohol + NAD(+) = an aldehyde + NADH + H(+). It carries out the reaction a secondary alcohol + NAD(+) = a ketone + NADH + H(+). Its function is as follows. Preferred specificity is towards 1-propanol. This is Alcohol dehydrogenase, propanol-preferring (adhP) from Escherichia coli (strain K12).